A 176-amino-acid chain; its full sequence is Large ribosomal subunit protein uL6 (176 aa).

The protein belongs to the universal ribosomal protein uL6 family. Part of the 50S ribosomal subunit.

This protein binds to the 23S rRNA, and is important in its secondary structure. It is located near the subunit interface in the base of the L7/L12 stalk, and near the tRNA binding site of the peptidyltransferase center. This Methanosarcina mazei (strain ATCC BAA-159 / DSM 3647 / Goe1 / Go1 / JCM 11833 / OCM 88) (Methanosarcina frisia) protein is Large ribosomal subunit protein uL6.